A 417-amino-acid chain; its full sequence is MFSFEKNSLKNTDKEIFDAIELEVKRQHEHVELIASENYASPAVMEAQGSQLTNKYAEGYHGKRYYGGCEFVDIAEKLAIERAQQLFGVDYANVQPHSGSQANAAVYNAVLKPGDTVLGMDLGAGGHLTHGSKVNFSGKIYNSIQYGLDENGDIDYEQVAQLAKEHKPKMIIAGFSAFSGIINWQKFREIADSVDAVLMADIAHVAGLVAAGVYPNPFPYVYVATTTTHKTLRGPRGGLILCNNNPELAKKFQSAIFPGIQGGPLMHVIAAKAVAFKEALEPSFVDYQKQVLKNAKAMEKVLKQRGINIISGGTSNHLLLLDITNTGFSGKEAEAALGRANITVNKNSIPNDPRSPFVTSGLRIGSPAITTRGFKEKECELVANLLADVVFNCGDEKVENETAAKVLDLCDKLPVYK.

(6S)-5,6,7,8-tetrahydrofolate is bound by residues Leu-122 and 126 to 128 (GHL). The residue at position 230 (Lys-230) is an N6-(pyridoxal phosphate)lysine. 355 to 357 (SPF) contacts (6S)-5,6,7,8-tetrahydrofolate.

Belongs to the SHMT family. As to quaternary structure, homodimer. The cofactor is pyridoxal 5'-phosphate.

The protein localises to the cytoplasm. The catalysed reaction is (6R)-5,10-methylene-5,6,7,8-tetrahydrofolate + glycine + H2O = (6S)-5,6,7,8-tetrahydrofolate + L-serine. It functions in the pathway one-carbon metabolism; tetrahydrofolate interconversion. It participates in amino-acid biosynthesis; glycine biosynthesis; glycine from L-serine: step 1/1. Functionally, catalyzes the reversible interconversion of serine and glycine with tetrahydrofolate (THF) serving as the one-carbon carrier. This reaction serves as the major source of one-carbon groups required for the biosynthesis of purines, thymidylate, methionine, and other important biomolecules. Also exhibits THF-independent aldolase activity toward beta-hydroxyamino acids, producing glycine and aldehydes, via a retro-aldol mechanism. The polypeptide is Serine hydroxymethyltransferase (Francisella tularensis subsp. holarctica (strain LVS)).